A 256-amino-acid chain; its full sequence is Thiazole synthase (256 aa).

K96 (schiff-base intermediate with DXP) is an active-site residue. 1-deoxy-D-xylulose 5-phosphate contacts are provided by residues G157, 184 to 185 (AG), and 206 to 207 (NT).

This sequence belongs to the ThiG family. Homotetramer. Forms heterodimers with either ThiH or ThiS.

The protein localises to the cytoplasm. The catalysed reaction is [ThiS sulfur-carrier protein]-C-terminal-Gly-aminoethanethioate + 2-iminoacetate + 1-deoxy-D-xylulose 5-phosphate = [ThiS sulfur-carrier protein]-C-terminal Gly-Gly + 2-[(2R,5Z)-2-carboxy-4-methylthiazol-5(2H)-ylidene]ethyl phosphate + 2 H2O + H(+). The protein operates within cofactor biosynthesis; thiamine diphosphate biosynthesis. Functionally, catalyzes the rearrangement of 1-deoxy-D-xylulose 5-phosphate (DXP) to produce the thiazole phosphate moiety of thiamine. Sulfur is provided by the thiocarboxylate moiety of the carrier protein ThiS. In vitro, sulfur can be provided by H(2)S. This chain is Thiazole synthase, found in Roseobacter denitrificans (strain ATCC 33942 / OCh 114) (Erythrobacter sp. (strain OCh 114)).